We begin with the raw amino-acid sequence, 347 residues long: Microfibril-associated glycoprotein 3 (347 aa).

A signal peptide spans 1–22 (MKLHYCLCILLVVTFVPTALVL). The Extracellular portion of the chain corresponds to 23-139 (EDVTPLGTNQ…TLRVIFTSGD (117 aa)). Asparagine 31, asparagine 36, asparagine 63, and asparagine 103 each carry an N-linked (GlcNAc...) asparagine glycan. The Ig-like C2-type domain occupies 47-130 (AGSYSGDDVI…SPTRASYSVT (84 aa)). A disulfide bond links cysteine 68 and cysteine 117. Residues 140–160 (MSVYYMVVCLIAFTITLILNV) form a helical membrane-spanning segment. Topologically, residues 161–347 (TRLCLMSTHL…SAEGSTHHRE (187 aa)) are cytoplasmic. A disordered region spans residues 280-347 (NPELGRSNSP…SAEGSTHHRE (68 aa)). The segment covering 311-331 (VHLQSETKSIGTDSQDSSHFS) has biased composition (polar residues).

Glycosylated.

Its subcellular location is the cell membrane. Component of the elastin-associated microfibrils. The chain is Microfibril-associated glycoprotein 3 (Mfap3) from Rattus norvegicus (Rat).